The primary structure comprises 146 residues: Single-stranded DNA-binding protein, mitochondrial (146 aa).

Residues Met-1–His-16 constitute a mitochondrion transit peptide. An SSB domain is found at Ile-29–Ser-140.

The protein resides in the mitochondrion. Its subcellular location is the mitochondrion matrix. It is found in the mitochondrion nucleoid. Its function is as follows. Binds preferentially and cooperatively to pyrimidine rich single-stranded DNA (ss-DNA). May be required to maintain the copy number of mitochondrial DNA (mtDNA) and play a crucial role during mtDNA replication. Required for retinal ganglion cell differentiation and retinal integrity. This is Single-stranded DNA-binding protein, mitochondrial from Danio rerio (Zebrafish).